We begin with the raw amino-acid sequence, 500 residues long: UDP-N-acetylmuramoyl-L-alanyl-D-glutamate--2,6-diaminopimelate ligase (500 aa).

UDP-N-acetyl-alpha-D-muramoyl-L-alanyl-D-glutamate is bound by residues L26, S28, and 43-45; that span reads HQV. 123 to 129 provides a ligand contact to ATP; that stretch reads GTNGKTT. UDP-N-acetyl-alpha-D-muramoyl-L-alanyl-D-glutamate contacts are provided by residues N164, 165–166, S192, Q198, and R200; that span reads TT. An N6-carboxylysine modification is found at K232. Meso-2,6-diaminopimelate-binding positions include R399, 423-426, G474, and E478; that span reads DNPR. The short motif at 423–426 is the Meso-diaminopimelate recognition motif element; sequence DNPR.

It belongs to the MurCDEF family. MurE subfamily. The cofactor is Mg(2+). Post-translationally, carboxylation is probably crucial for Mg(2+) binding and, consequently, for the gamma-phosphate positioning of ATP.

The protein localises to the cytoplasm. It carries out the reaction UDP-N-acetyl-alpha-D-muramoyl-L-alanyl-D-glutamate + meso-2,6-diaminopimelate + ATP = UDP-N-acetyl-alpha-D-muramoyl-L-alanyl-gamma-D-glutamyl-meso-2,6-diaminopimelate + ADP + phosphate + H(+). Its pathway is cell wall biogenesis; peptidoglycan biosynthesis. Its function is as follows. Catalyzes the addition of meso-diaminopimelic acid to the nucleotide precursor UDP-N-acetylmuramoyl-L-alanyl-D-glutamate (UMAG) in the biosynthesis of bacterial cell-wall peptidoglycan. This is UDP-N-acetylmuramoyl-L-alanyl-D-glutamate--2,6-diaminopimelate ligase from Actinobacillus pleuropneumoniae serotype 5b (strain L20).